A 1437-amino-acid polypeptide reads, in one-letter code: MKKSQREDIFKKMSEEMDNITAEEIIDKHLQKDLDAEENQNVAKTLRGKVREKLKISKINKGEKSSTEQLIDSEIHQRSKLSPQTEVSLDESLSFFILSGEEGSALGKSSEQRPVNRSYPKCFSLGVNLQNVAESEEEEFMKEFILTDILKVKAADYEDDQEQIKKQKANIFVPSSSPVVNQRKLPKDMMPRILEDEGFYIQRKPEIYKKTCNKMENRLLKLEEGKCWFGESGEIMSLPTPIKQSWNFRLNVRKEPLNPLLKTIYRKAVKYDLGSSFMNKMEGSREIYQLDLNIVGLQFSHHHLFNQEQVLCARLLQLYECFQDRQQQNVSQLLYEKLKALTDATKLSNENSEINQLTRKSLQDYYWQISNTKQMYDLERGKDLSLLHSILRTWKQIKSLRHGQGFTSTPIKLQVQRIKMNKCDEQEQISEMSETEKKNEGKELKNGKKLESLSYLASDETEIERIKPITLRPQLSFTAELTSLSKCSLHEQKRRAKIQKLKYFIKIFYNNKQVSCTSVSPLQFDFKVMFQQIFNIQLMYWPEVICLEVYEKSKRTSLLAKLYIPLPNYTELKGKTALQYVEFSSDKLVMPADGEVGSNVPFLLEGNGTEELCLLTSGKLSYSLSWSLDENGLPLIPMPQSLRSSYCSMLRNVDARSVPGIPWLMNEQKLFEWANEVRIDPNNPEYSDLMESVTYMRLKGQDIPKYFRLEQLQDEFNFVSEEEMAKSKRFQLLQLRNAGQLDNFLLQQMPLHDTEIPDLVFQEYESQKEKEVSVSDVNSITAQRINSANFLKKVRRLIMKRIVKISKCNLSDIVNDYEEIVSTSQLTDAVCKFVEPRRKLKPQRKERKKVTAQAISDGDIKILVRIVRAYNIPTRKTTINGSLDMPTCLKSSISCLRHRETIKSVASDETLHEDTVHPFVEVSFQHTVYKTNTASGSHPCWNEEIKVDFVSPGHDYSFSSLSKIKDNIYINIFDEMMTEKHEDHCLKSCSGHSYIRKNWLGCIVFPFSALLQQSEISGTFQVTIPPVLLGYTWSNTYVFPKEDSNEQNLKECTFLNIFATIEPQISYVTCNPTLDKFLDQTEVLQRAQIFKKNCKAMFPNRRIVTTVFNDEGIQFLVTRYIKALNPPQQLLDIFLHNSNATFDLIARFVSLIPFVPNTPDENDGSDIWMTSEHCISLAIGNKEEHAILLCNFFLYFGKKALVLLGTSVLEGHVAYVVTQETNEYLLWNPSTGQCYKQFDPFCPLKSVDCLFDDRNVWFNIQQNNTPMAVFFDYSKESFWKQLLPKNVQGTKIQSIQPEEIIYFETDKSMVEDLRNRIERTLKSKVMEWRPKHPTHWNRQCTFILRQILPKLEFGIGSFVSSEGDNEFERILQFYWVTGFPIQMPYIDVQSIIDAVYQTGIHSAEFPQTEFALAVYIHPYPNNILSVWVYLASLVQHQ.

The polypeptide is Protein CC2D2B (Homo sapiens (Human)).